Here is a 429-residue protein sequence, read N- to C-terminus: MAMNFVTFNQDYSYLAVATSKGFRIFTTDPFAKSYETKEGNIAIIEMLFSTSLVALILSPRRLQITNTKRQSTICELTFPTTVLAVKLNRKRLVIVLEDQIYLYDIQTMKLLYTIQTSPNPNAICALSPSSDNCYLAYPLPQKAPPSSFNPPSHTPPGSTHVSPTSGEVLIFDTLKLEAINVIEAHRSPLACITLNSDGTLLATASDKGTIIRVFSVPDGHKLYQFRRGSMPSRIFSMSFNTTSTLLCVSSSTETIHLFKLSHPTSSPDASPSSPVGRDRSLSQSSSGYSPDRGDLTGDVGSSDFPARKHNGTLMGMIRRTSQNVGSTVAAKVGGYLPKGVSEMWEPTRDFAWFKLPKPNQTSGGSVNNGPLRSVVAMSSNTPQVMVVTSDGNFYVFSIDLSKGGEGTLTKQYSVLESNDRLGYSVTDY.

WD repeat units follow at residues 1 to 36, 69 to 114, 139 to 182, 185 to 225, 230 to 269, 309 to 355, and 367 to 407; these read MAMN…KSYE, KRQS…LLYT, PLPQ…AINV, AHRS…KLYQ, SMPS…SSPD, KHNG…AWFK, and VNNG…GGEG. A L/FRRG motif motif is present at residues 226–230; that stretch reads FRRGS. Over residues 262 to 275 the composition is skewed to low complexity; the sequence is SHPTSSPDASPSSP. The interval 262-308 is disordered; sequence SHPTSSPDASPSSPVGRDRSLSQSSSGYSPDRGDLTGDVGSSDFPAR.

The protein belongs to the WD repeat PROPPIN family. In terms of assembly, component of the PI(3,5)P2 regulatory complex.

The protein localises to the preautophagosomal structure membrane. The protein resides in the vacuole membrane. It is found in the endosome membrane. Its function is as follows. The PI(3,5)P2 regulatory complex regulates both the synthesis and turnover of phosphatidylinositol 3,5-bisphosphate (PtdIns(3,5)P2). Necessary for proper vacuole morphology. Plays an important role in osmotically-induced vacuole fragmentation. Required for cytoplasm to vacuole transport (Cvt) vesicle formation, pexophagy and starvation-induced autophagy. Involved in correct atg9 trafficking to the pre-autophagosomal structure. Might also be involved in premeiotic DNA replication. This is Autophagy-related protein 18 (atg18) from Neosartorya fischeri (strain ATCC 1020 / DSM 3700 / CBS 544.65 / FGSC A1164 / JCM 1740 / NRRL 181 / WB 181) (Aspergillus fischerianus).